The chain runs to 107 residues: Iron-sulfur cluster assembly protein CyaY (107 aa).

This sequence belongs to the frataxin family.

Functionally, involved in iron-sulfur (Fe-S) cluster assembly. May act as a regulator of Fe-S biogenesis. This is Iron-sulfur cluster assembly protein CyaY from Enterobacter sp. (strain 638).